The chain runs to 119 residues: Multi-drug resistance efflux pump PmrA homolog (119 aa).

4 helical membrane-spanning segments follow: residues 1–20 (ILIG…FVQS), 22–42 (LQLG…MPSV), 64–84 (MCSN…AGYI), and 88–108 (AAIV…FINF).

This sequence belongs to the major facilitator superfamily.

It localises to the cell membrane. This is Multi-drug resistance efflux pump PmrA homolog (pmrA) from Lactococcus lactis subsp. cremoris (Streptococcus cremoris).